Reading from the N-terminus, the 1015-residue chain is Condensin complex subunit 3 (1015 aa).

HEAT repeat units lie at residues 94 to 131 (GLLNYLFTFLLKSHEANSNAVRFRVCLLINKLLGSMPE), 138 to 173 (DVFDKINKAMLIRLKDKIPNVRIQAVLALSRLQDPK), 174 to 212 (DDECPVVNAYATLIENDSNPEVRRAVLSCIAPSAKTLPK), 238 to 275 (MRAMSIAQRVMLLQQGLNDRSDAVKQAMQKHLLQGWLR), and 276 to 313 (FSEGNILELLHRLDVENSSEVAVSVLNALFSITPLSEL). Ser-390 is modified (phosphoserine). 3 HEAT repeats span residues 399-436 (EFIGQQLILIIKSLDTSEEGGRKKLLAVLQEILILPTI), 439-478 (SLVSFLVERLLHIIIDDNKRTQIVTEIISEIRAPIVTVGV), and 617-654 (DFARKHFVLLLQVLQIDDVTIKISALKAIFDQLMTFGI). At Ser-674 the chain carries Phosphoserine. HEAT repeat units lie at residues 687-724 (ATAKNVLKLLSDFLDSEVSELRTGAAEGLAKLMFSGLL) and 865-907 (KDLL…QAEA). Thr-931 is modified (phosphothreonine). A compositionally biased stretch (polar residues) spans 941–950 (ASKSTQLKTN). Residues 941–994 (ASKSTQLKTNRGQRKVTVSARTNRRCQTAEADSESDHEVPEPESEMKMRLPRRA) form a disordered region. A phosphoserine mark is found at Ser-973, Ser-975, Ser-1002, and Ser-1015. The span at 974-988 (ESDHEVPEPESEMKM) shows a compositional bias: basic and acidic residues.

The protein belongs to the CND3 (condensin subunit 3) family. Component of the condensin complex, which contains the SMC2 and SMC4 heterodimer, and three non SMC subunits that probably regulate the complex: NCAPH/BRRN1, NCAPD2/CAPD2 and NCAPG. Post-translationally, phosphorylated by CDK1. Its phosphorylation, as well as that of NCAPD2 and NCAPH subunits, activates the condensin complex and is required for chromosome condensation. Highly expressed in testis.

It localises to the nucleus. The protein resides in the cytoplasm. Its subcellular location is the chromosome. Regulatory subunit of the condensin complex, a complex required for conversion of interphase chromatin into mitotic-like condense chromosomes. The condensin complex probably introduces positive supercoils into relaxed DNA in the presence of type I topoisomerases and converts nicked DNA into positive knotted forms in the presence of type II topoisomerases. This chain is Condensin complex subunit 3 (NCAPG), found in Homo sapiens (Human).